We begin with the raw amino-acid sequence, 147 residues long: Hemoglobin subunit beta (147 aa).

The residue at position 2 (V2) is an N-acetylvaline. Residues 3 to 147 (HLSGEEKSAV…VANALAHKYH (145 aa)) enclose the Globin domain. Phosphothreonine is present on T13. S45 carries the phosphoserine modification. N6-acetyllysine is present on K60. H64 provides a ligand contact to heme b. K83 bears the N6-acetyllysine mark. Residue H93 participates in heme b binding. S-nitrosocysteine is present on C94. K145 carries the N6-acetyllysine modification.

The protein belongs to the globin family. Heterotetramer of two alpha chains and two beta chains. In terms of tissue distribution, red blood cells.

In terms of biological role, involved in oxygen transport from the lung to the various peripheral tissues. This is Hemoglobin subunit beta (HBB) from Lepus europaeus (European hare).